Here is a 120-residue protein sequence, read N- to C-terminus: Protein CcdB (120 aa).

In terms of domain architecture, Response regulatory spans 3–118 (RVLVVDDAKF…KVLEAVSRVM (116 aa)). Position 53 is a 4-aspartylphosphate (aspartate 53).

This is Protein CcdB (ccdB) from Bacillus subtilis (strain 168).